The primary structure comprises 204 residues: Protein GrpE (204 aa).

The disordered stretch occupies residues 1-55; sequence MSSKNNPESETKAKNKWEKVMEAEEEQEEGRGDGSQEMEPHREGLEFPSREKLEG. Basic and acidic residues-rich tracts occupy residues 7-22 and 29-55; these read PESE…KVME and EGRG…KLEG.

Belongs to the GrpE family. As to quaternary structure, homodimer.

The protein resides in the cytoplasm. Its function is as follows. Participates actively in the response to hyperosmotic and heat shock by preventing the aggregation of stress-denatured proteins, in association with DnaK and GrpE. It is the nucleotide exchange factor for DnaK and may function as a thermosensor. Unfolded proteins bind initially to DnaJ; upon interaction with the DnaJ-bound protein, DnaK hydrolyzes its bound ATP, resulting in the formation of a stable complex. GrpE releases ADP from DnaK; ATP binding to DnaK triggers the release of the substrate protein, thus completing the reaction cycle. Several rounds of ATP-dependent interactions between DnaJ, DnaK and GrpE are required for fully efficient folding. This is Protein GrpE from Coxiella burnetii (strain RSA 331 / Henzerling II).